Reading from the N-terminus, the 88-residue chain is Large ribosomal subunit protein bL27 (88 aa).

Belongs to the bacterial ribosomal protein bL27 family.

The sequence is that of Large ribosomal subunit protein bL27 from Carboxydothermus hydrogenoformans (strain ATCC BAA-161 / DSM 6008 / Z-2901).